The primary structure comprises 270 residues: Regulatory protein RecX (270 aa).

This sequence belongs to the RecX family.

The protein localises to the cytoplasm. Its function is as follows. Modulates RecA activity. In Bacillus cereus (strain G9842), this protein is Regulatory protein RecX.